We begin with the raw amino-acid sequence, 764 residues long: Subtilisin-like protease SBT1.6 (764 aa).

An N-terminal signal peptide occupies residues 1–20 (MASSTIVLLLFLSFPFISFA). The 54-residue stretch at 46-99 (HWYSTEFAEESRIVHVYHTVFHGFSAVVTPDEADNLRNHPAVLAVFEDRRRELH) folds into the Inhibitor I9 domain. In terms of domain architecture, Peptidase S8 spans 103–606 (SPQFLGLQNQ…SGHLNLGRAM (504 aa)). Asp131 acts as the Charge relay system in catalysis. Residue Asn191 is glycosylated (N-linked (GlcNAc...) asparagine). His205 functions as the Charge relay system in the catalytic mechanism. The region spanning 377–457 (SSASLCMENT…NEGDRIKAYA (81 aa)) is the PA domain. Ser538 (charge relay system) is an active-site residue. N-linked (GlcNAc...) asparagine glycosylation occurs at Asn578.

This sequence belongs to the peptidase S8 family. In terms of tissue distribution, expressed in roots, leaves and flowers of mature plants.

The sequence is that of Subtilisin-like protease SBT1.6 from Arabidopsis thaliana (Mouse-ear cress).